A 179-amino-acid polypeptide reads, in one-letter code: Cell division protein ZapC (179 aa).

It belongs to the ZapC family. Interacts directly with FtsZ.

It is found in the cytoplasm. Contributes to the efficiency of the cell division process by stabilizing the polymeric form of the cell division protein FtsZ. Acts by promoting interactions between FtsZ protofilaments and suppressing the GTPase activity of FtsZ. The protein is Cell division protein ZapC of Aliivibrio salmonicida (strain LFI1238) (Vibrio salmonicida (strain LFI1238)).